The chain runs to 82 residues: Cytochrome b559 subunit alpha (82 aa).

A helical membrane pass occupies residues 22 to 36 (VIHSITIPALFIAGW). His-24 is a heme binding site.

It belongs to the PsbE/PsbF family. Heterodimer of an alpha subunit and a beta subunit. PSII is composed of 1 copy each of membrane proteins PsbA, PsbB, PsbC, PsbD, PsbE, PsbF, PsbH, PsbI, PsbJ, PsbK, PsbL, PsbM, PsbT, PsbX, PsbY, PsbZ, Psb30/Ycf12, peripheral proteins PsbO, CyanoQ (PsbQ), PsbU, PsbV and a large number of cofactors. It forms dimeric complexes. It depends on heme b as a cofactor.

The protein resides in the cellular thylakoid membrane. This b-type cytochrome is tightly associated with the reaction center of photosystem II (PSII). PSII is a light-driven water:plastoquinone oxidoreductase that uses light energy to abstract electrons from H(2)O, generating O(2) and a proton gradient subsequently used for ATP formation. It consists of a core antenna complex that captures photons, and an electron transfer chain that converts photonic excitation into a charge separation. The chain is Cytochrome b559 subunit alpha from Trichodesmium erythraeum (strain IMS101).